The primary structure comprises 343 residues: Holliday junction branch migration complex subunit RuvB (343 aa).

The large ATPase domain (RuvB-L) stretch occupies residues 1–182; that stretch reads MTDPIPLHTP…FGIPVRLNFY (182 aa). Residues Leu-21, Arg-22, Gly-63, Lys-66, Thr-67, Thr-68, Arg-172, Tyr-182, and Arg-219 each coordinate ATP. Thr-67 provides a ligand contact to Mg(2+). The segment at 183 to 253 is small ATPAse domain (RuvB-S); it reads TEEELEKVVT…IADAALTRLE (71 aa). The interval 256-343 is head domain (RuvB-H); it reads GLGLDAMDRR…SQTGLFDGKS (88 aa). The DNA site is built by Arg-292, Arg-311, and Arg-316.

Belongs to the RuvB family. As to quaternary structure, homohexamer. Forms an RuvA(8)-RuvB(12)-Holliday junction (HJ) complex. HJ DNA is sandwiched between 2 RuvA tetramers; dsDNA enters through RuvA and exits via RuvB. An RuvB hexamer assembles on each DNA strand where it exits the tetramer. Each RuvB hexamer is contacted by two RuvA subunits (via domain III) on 2 adjacent RuvB subunits; this complex drives branch migration. In the full resolvosome a probable DNA-RuvA(4)-RuvB(12)-RuvC(2) complex forms which resolves the HJ.

The protein resides in the cytoplasm. The enzyme catalyses ATP + H2O = ADP + phosphate + H(+). In terms of biological role, the RuvA-RuvB-RuvC complex processes Holliday junction (HJ) DNA during genetic recombination and DNA repair, while the RuvA-RuvB complex plays an important role in the rescue of blocked DNA replication forks via replication fork reversal (RFR). RuvA specifically binds to HJ cruciform DNA, conferring on it an open structure. The RuvB hexamer acts as an ATP-dependent pump, pulling dsDNA into and through the RuvAB complex. RuvB forms 2 homohexamers on either side of HJ DNA bound by 1 or 2 RuvA tetramers; 4 subunits per hexamer contact DNA at a time. Coordinated motions by a converter formed by DNA-disengaged RuvB subunits stimulates ATP hydrolysis and nucleotide exchange. Immobilization of the converter enables RuvB to convert the ATP-contained energy into a lever motion, pulling 2 nucleotides of DNA out of the RuvA tetramer per ATP hydrolyzed, thus driving DNA branch migration. The RuvB motors rotate together with the DNA substrate, which together with the progressing nucleotide cycle form the mechanistic basis for DNA recombination by continuous HJ branch migration. Branch migration allows RuvC to scan DNA until it finds its consensus sequence, where it cleaves and resolves cruciform DNA. The polypeptide is Holliday junction branch migration complex subunit RuvB (Erythrobacter litoralis (strain HTCC2594)).